The following is a 400-amino-acid chain: Calsequestrin-2 (400 aa).

A signal peptide spans 1 to 19 (MKRTHLFIVGVYVLSSCRA). Tyr-282 is subject to Phosphotyrosine. N-linked (GlcNAc...) asparagine glycosylation is present at Asn-335. The interval 365-400 (VLSGKINTEDDDDEDDDDDNSDEEDNDDSDDDDDDE) is disordered. Residues 373–400 (EDDDDEDDDDDNSDEEDNDDSDDDDDDE) show a composition bias toward acidic residues.

Belongs to the calsequestrin family. Monomer, homodimer and homooligomer. Mostly monomeric in the absence of calcium. Forms higher oligomers in a calcium-dependent manner. Dimers associate to form tetramers, that then form linear homomer chains. Interacts with ASPH and TRDN. Phosphorylation in the C-terminus, probably by CK2, moderately increases calcium buffering capacity. Post-translationally, N-glycosylated.

The protein resides in the sarcoplasmic reticulum lumen. Calsequestrin is a high-capacity, moderate affinity, calcium-binding protein and thus acts as an internal calcium store in muscle. Calcium ions are bound by clusters of acidic residues at the protein surface, especially at the interface between subunits. Can bind around 60 Ca(2+) ions. Regulates the release of lumenal Ca(2+) via the calcium release channel RYR2; this plays an important role in triggering muscle contraction. Plays a role in excitation-contraction coupling in the heart and in regulating the rate of heart beats. The protein is Calsequestrin-2 (CASQ2) of Pongo abelii (Sumatran orangutan).